The chain runs to 306 residues: GTP cyclohydrolase FolE2 (306 aa).

Belongs to the GTP cyclohydrolase IV family.

The enzyme catalyses GTP + H2O = 7,8-dihydroneopterin 3'-triphosphate + formate + H(+). The protein operates within cofactor biosynthesis; 7,8-dihydroneopterin triphosphate biosynthesis; 7,8-dihydroneopterin triphosphate from GTP: step 1/1. In terms of biological role, converts GTP to 7,8-dihydroneopterin triphosphate. This chain is GTP cyclohydrolase FolE2, found in Xanthomonas oryzae pv. oryzae (strain MAFF 311018).